The primary structure comprises 693 residues: MNNKADSFFWNLRQFSTLVPTSRTMRLYRLGLCKPKIVHSNWNILSNFHNRMRSTDIIRYLFQDAFIFKSDVGFQTKGISTLTARRIERLLYARRLFFDSKQSLVPVDKSDDGLKKVNLNHEVSNEDVLTKETKPNRISSRKLSQECNSLSDVLDAFSKAPTFPSSNYFTAMWTIAKRLSDGQKRFEKRLMFSHPAFNQLCEHMMREAKIMQYKYLLFSLYSMVKLGIPQNTILVQTLLRVTQERINECDETCLSVLSAVLEAMEPCKNVHVLQMGFRILVDQQVWKIEDVFTLQVVMKCIGKDAPIALKRKLEMKALRELDRFSVLNSQHMFEVLAAMNHRSLTLLDECSKVVLDNIHGCPLRIMINILQSCKDLQYHNLDLFKGLADYVAATFDIWKFRKVLFILILFENLGFRPVGLMDLFMKRIVEDPESLNMKNILPTLHTYSSLNHVYKCQNKEQFLEVMASALTGYLHTISSENLLHAVYSFCLMNYFPLAPFNQLLQKDVISELLTSDDMKNVYKLHMLDTCLKLDDTVYLKDIALSLPQLPRELPPSHPNAKVAEVLSSLLGGEGHFSKDVHLPHNYHIDFEIRMDTNRNQVLPLSDVDTTSATDIQRVAVLCVSRSAYCLGSSHPRGFLAMKMRHLNAMGFRVILVNNWEMDKLEMEDAVTFLKTKIYSVEALPVAAVNVQST.

Phosphoserine occurs at positions 110 and 124. The RAP domain maps to valine 618–threonine 675. Position 692 is a phosphoserine (serine 692).

It belongs to the FAST kinase family. In terms of assembly, monomer. Found in a complex with GRSF1, DDX28, DHX30 and FASTKD5. Associates with the 16S mitochondrial rRNA (16S mt-rRNA). Forms a regulatory protein-RNA complex, consisting of RCC1L, NGRN, RPUSD3, RPUSD4, TRUB2, FASTKD2 and 16S mt-rRNA.

The protein resides in the mitochondrion matrix. It localises to the mitochondrion nucleoid. In terms of biological role, plays an important role in assembly of the mitochondrial large ribosomal subunit. As a component of a functional protein-RNA module, consisting of RCC1L, NGRN, RPUSD3, RPUSD4, TRUB2, FASTKD2 and 16S mitochondrial ribosomal RNA (16S mt-rRNA), controls 16S mt-rRNA abundance and is required for intra-mitochondrial translation. May play a role in mitochondrial apoptosis. This is FAST kinase domain-containing protein 2, mitochondrial (FASTKD2) from Pongo abelii (Sumatran orangutan).